We begin with the raw amino-acid sequence, 191 residues long: Putative manganese efflux pump MntP (191 aa).

6 helical membrane-spanning segments follow: residues 3-23, 37-57, 65-85, 107-129, 144-164, and 169-189; these read PISI…AAIG, LRAG…GWLL, VEAF…IHMI, WKLA…GLAF, CTLT…SMVG, and IIGG…HLHG.

It belongs to the MntP (TC 9.B.29) family.

The protein resides in the cell inner membrane. Probably functions as a manganese efflux pump. The chain is Putative manganese efflux pump MntP from Stenotrophomonas maltophilia (strain R551-3).